A 374-amino-acid chain; its full sequence is tRNA-specific 2-thiouridylase MnmA (374 aa).

ATP-binding positions include 16-23 (GMSGGVDS) and Met42. The interaction with target base in tRNA stretch occupies residues 102–104 (NPD). Cys107 functions as the Nucleophile in the catalytic mechanism. An intrachain disulfide couples Cys107 to Cys203. Gly131 serves as a coordination point for ATP. Residues 153–155 (KDQ) are interaction with tRNA. Cys203 functions as the Cysteine persulfide intermediate in the catalytic mechanism. An interaction with tRNA region spans residues 311 to 312 (RY).

Belongs to the MnmA/TRMU family.

Its subcellular location is the cytoplasm. The catalysed reaction is S-sulfanyl-L-cysteinyl-[protein] + uridine(34) in tRNA + AH2 + ATP = 2-thiouridine(34) in tRNA + L-cysteinyl-[protein] + A + AMP + diphosphate + H(+). Functionally, catalyzes the 2-thiolation of uridine at the wobble position (U34) of tRNA, leading to the formation of s(2)U34. The protein is tRNA-specific 2-thiouridylase MnmA of Exiguobacterium sibiricum (strain DSM 17290 / CCUG 55495 / CIP 109462 / JCM 13490 / 255-15).